The chain runs to 1078 residues: MAEDDAEKAFFQAQAMNADSVDYKAVEDQGASSDSDDYDPSKTLQDQYSASILDSKQSEIAPSSASPSDPNPPTQSIPPETDPSQPADSAYPSQTPSRADSQASVSAPASGTSVPLKTRTIGGFVVEDEDEDDAGDADYEPPAVLGVEDMNTISMNVPQQPISGNANEDTPTPDVSMDGAVQASADAKNFPNSSYTPASAAASKSDTPALLSQDMYNSRTLQSENMQDSAAATPVPDSPSTSKGRLPHDRVGILEDRIQEDPRGDIPAWLELINEHRNRNRIDSAREVYERFLTAFPFSAEQWVAYATMESELNELYRLEQIFNRTLLTIPDVQLWTVYLDYVRRRNPLTTDTTGQSRRIISSAYDLALQYVGVDKDSGSIWTDYVQFIRSGPGNVGGSGWQDQQKMDLLRKAYQKAICVPTQAVNNLWKEYDQFEMGLNKLTGRKFLQEQSPAYMTARSSYTELQNITRDLNRTTLPRLPPVLGSDGDIEFGQQVDIWKRWIKWEKGDPLVLKEEDQAAFKARVIYVYKQALMALRFLPEIWFEAAEFCFLNDMENEGNEFLKNGIEANPESCLLAFKRADRLEITSESEQDPIKRGAKVREPYDKLLNALYDLIAKARTRESQDVARLEETFAKINPDTQPSKTDDDDDDQSDSKARESMKNAQIEALRNAHAIQIGILSKTVSFAWIALMRAMRRIQGKGKPGEMPGSRQVFADARKRGRITSDVYIASALIEYHCYKDPAATKIFERGAKLFPEDENFALEYLKHLIDINDVINARAVFEMTVRKLASNPENVHKTKPIFAFLHEYESRYGDLVQVINLENRMRELFPEDPTLEQFAHRYSSPAFDPTVVRPIISPSQTRPKTAFPTEQPVSRHGTPSSRYPDASVTNSPKRPLEDFDDEMNRPRKFIRADSPLKTTQRRQLDPPKRTQQVISNQTGSQFRSQGSPAPLPRDIVYLLSIIPSASAYNAGRFSPEKLVDLIRRIDMPTSISQIPLPPSVRGLGFPEMSICLWGRLPSTTWPKTVHPCGKPTFIALSSITRVKCKRFTGWRSPYIRKPSLPPYGTYSPSLAFLISV.

Disordered stretches follow at residues 15-209 (AMNA…DTPA) and 222-251 (QSEN…HDRV). Residues 42–55 (KTLQDQYSASILDS) are compositionally biased toward polar residues. Residues 58–68 (SEIAPSSASPS) show a composition bias toward low complexity. Residues 82–115 (DPSQPADSAYPSQTPSRADSQASVSAPASGTSVP) show a composition bias toward polar residues. Acidic residues predominate over residues 126–139 (VEDEDEDDAGDADY). Polar residues-rich tracts occupy residues 151-170 (NTIS…NEDT) and 190-206 (FPNS…SKSD). 6 HAT repeats span residues 280–312 (NRID…MESE), 314–345 (NELY…YVRR), 356–391 (QSRR…FIRS), 405–438 (QKMD…FEMG), 475–508 (TTLP…WEKG), and 520–552 (AFKA…FCFL). Disordered regions lie at residues 632–663 (ETFA…ESMK) and 851–950 (PTVV…QGSP). Polar residues predominate over residues 879-894 (GTPSSRYPDASVTNSP). Basic and acidic residues predominate over residues 896 to 907 (RPLEDFDDEMNR). Over residues 931 to 949 (RTQQVISNQTGSQFRSQGS) the composition is skewed to polar residues.

It localises to the nucleus. The protein resides in the cytoplasm. Functionally, component of the cleavage factor IA (CFIA) complex, which is involved in the endonucleolytic cleavage during polyadenylation-dependent pre-mRNA 3'-end formation. In Aspergillus oryzae (strain ATCC 42149 / RIB 40) (Yellow koji mold), this protein is mRNA 3'-end-processing protein rna14 (rna14).